A 546-amino-acid polypeptide reads, in one-letter code: MSDSITIFDTTLRDGEQAPGASMTVPEKVHIAHKLADLNVDVIEAGFPISSPAQTEAVTRIATEVDGPVTCALARTKEDDIDAAGEALADGTDTRLHTFIATSDVHIEAKFDKLGNTMAEKREAIIQRAVRAIEQALTYTDNVEFSAEDAGRTDPEFLCEVVQAAAEAGATTINIPDTTGYCAPSEYTDLLETVVDCLPDPDAVTLSTHCHDDLGLATANTLAGIRAGARQVECTINGIGERAGNAALEEIVMALTVRADAFDVTADVHTEHLTPTSQTVSAATGFPVQPNKAIVGSNAFSHEAGIHQHGVLEERTTYEIMSATDVGQDAEQIRLGRHSGRHGLFNRLEAMGYAVPEGHRDALYDRFLDLADRKKEVFEEDLEQMMNDFGGDAVAAATGLPDNGVALNGGTPAYRLDQFSVHLSSDDEAKVSVRLQRDDGSAREEQATGEGPVDALYRALDHAVDAPHTLVDYSIRSISEGADAQGEVEVTIRYGENQFAGTARNTDVIRASAEAYVDALNRLVAAQEHAESVEFVQNGIMHTYGE.

Residues 5 to 274 form the Pyruvate carboxyltransferase domain; that stretch reads ITIFDTTLRD…TADVHTEHLT (270 aa). The Mn(2+) site is built by D14, H209, H211, and N245. The regulatory domain stretch occupies residues 415 to 546; sequence RLDQFSVHLS…QNGIMHTYGE (132 aa).

This sequence belongs to the alpha-IPM synthase/homocitrate synthase family. LeuA type 1 subfamily. In terms of assembly, homodimer. Requires Mn(2+) as cofactor.

Its subcellular location is the cytoplasm. The enzyme catalyses 3-methyl-2-oxobutanoate + acetyl-CoA + H2O = (2S)-2-isopropylmalate + CoA + H(+). It functions in the pathway amino-acid biosynthesis; L-leucine biosynthesis; L-leucine from 3-methyl-2-oxobutanoate: step 1/4. Catalyzes the condensation of the acetyl group of acetyl-CoA with 3-methyl-2-oxobutanoate (2-ketoisovalerate) to form 3-carboxy-3-hydroxy-4-methylpentanoate (2-isopropylmalate). The sequence is that of 2-isopropylmalate synthase from Salinibacter ruber (strain M8).